A 63-amino-acid polypeptide reads, in one-letter code: Large ribosomal subunit protein bL35 (63 aa).

Residues 26–50 (GSGMRHNLEHKSARKRRALKRDDVL) are disordered.

This sequence belongs to the bacterial ribosomal protein bL35 family.

This is Large ribosomal subunit protein bL35 from Bifidobacterium animalis subsp. lactis (strain AD011).